The chain runs to 43 residues: Photosystem II reaction center protein Psb30 (43 aa).

A helical transmembrane segment spans residues 16–36; sequence IAQLTMLAMVLIAGPVVIVLL.

Belongs to the Psb30/Ycf12 family. In terms of assembly, PSII is composed of 1 copy each of membrane proteins PsbA, PsbB, PsbC, PsbD, PsbE, PsbF, PsbH, PsbI, PsbJ, PsbK, PsbL, PsbM, PsbT, PsbX, PsbY, PsbZ, Psb30/Ycf12, peripheral proteins PsbO, CyanoQ (PsbQ), PsbU, PsbV and a large number of cofactors. It forms dimeric complexes.

It localises to the cellular thylakoid membrane. In terms of biological role, a core subunit of photosystem II (PSII), probably helps stabilize the reaction center. This Trichodesmium erythraeum (strain IMS101) protein is Photosystem II reaction center protein Psb30.